The following is a 156-amino-acid chain: Small ribosomal subunit protein uS7 (156 aa).

It belongs to the universal ribosomal protein uS7 family. As to quaternary structure, part of the 30S ribosomal subunit. Contacts proteins S9 and S11.

One of the primary rRNA binding proteins, it binds directly to 16S rRNA where it nucleates assembly of the head domain of the 30S subunit. Is located at the subunit interface close to the decoding center, probably blocks exit of the E-site tRNA. The polypeptide is Small ribosomal subunit protein uS7 (Nitrosococcus oceani (strain ATCC 19707 / BCRC 17464 / JCM 30415 / NCIMB 11848 / C-107)).